A 548-amino-acid chain; its full sequence is Probable malate:quinone oxidoreductase (548 aa).

Positions 522–548 (KPQAADSTPKPQLKPKPVQKEVADIAL) are disordered. Positions 539–548 (VQKEVADIAL) are enriched in basic and acidic residues.

It belongs to the MQO family. FAD serves as cofactor.

It carries out the reaction (S)-malate + a quinone = a quinol + oxaloacetate. Its pathway is carbohydrate metabolism; tricarboxylic acid cycle; oxaloacetate from (S)-malate (quinone route): step 1/1. This Escherichia coli O9:H4 (strain HS) protein is Probable malate:quinone oxidoreductase.